We begin with the raw amino-acid sequence, 477 residues long: Regulatory protein HrpB (477 aa).

Residues 375–477 enclose the HTH araC/xylS-type domain; it reads RRAYRYIIEN…NEAPSETIWR (103 aa). 2 DNA-binding regions (H-T-H motif) span residues 393 to 414 and 444 to 467; these read REVA…KSAV and IIDT…RKQF.

Functionally, positive regulation of hypersensitive response genes involved in plant pathogenicity and partly of its own synthesis in minimal medium. This Ralstonia nicotianae (strain ATCC BAA-1114 / GMI1000) (Ralstonia solanacearum) protein is Regulatory protein HrpB (hrpB).